We begin with the raw amino-acid sequence, 73 residues long: U3-agatoxin-Ao1k (73 aa).

A signal peptide spans 1-20 (MRTIISLLLLSAMVFAVIEA). The propeptide occupies 21–34 (ISLEEGLQLFEGER). Intrachain disulfides connect C36–C52, C43–C57, C51–C67, and C59–C65. S71 carries the post-translational modification Serine amide.

It belongs to the neurotoxin 07 (Beta/delta-agtx) family. 03 (aga-4) subfamily. Aga sub-subfamily. In terms of tissue distribution, expressed by the venom gland.

It localises to the secreted. Its function is as follows. Insecticidal neurotoxin that modulates the insect Nav channel (DmNaV1/tipE (para/tipE)) in a unique manner, with both the activation and inactivation processes being affected. The voltage dependence of activation is shifted toward more hyperpolarized potentials (analogous to site 4 toxins) and a non-inactivating persistent sodium current is induced (site 3-like action). Interestingly, both effects take place in a voltage-dependent manner, producing a bell-shaped curve between -80 and 0 mV. Compared to beta/delta-agatoxin-1 to -3, this toxin appears to affect the insect sodium channel only weakly. The chain is U3-agatoxin-Ao1k from Agelena orientalis (Funnel-web spider).